The chain runs to 161 residues: Phosphopantetheine adenylyltransferase (161 aa).

Position 10 (serine 10) interacts with substrate. Residues 10–11 and histidine 18 contribute to the ATP site; that span reads SF. Substrate contacts are provided by lysine 42, leucine 74, and arginine 88. Residues 88 to 89, glutamate 99, and 124 to 130 each bind ATP; these read RG and YSFLSSS.

The protein belongs to the bacterial CoaD family. As to quaternary structure, homohexamer. Mg(2+) serves as cofactor.

Its subcellular location is the cytoplasm. It catalyses the reaction (R)-4'-phosphopantetheine + ATP + H(+) = 3'-dephospho-CoA + diphosphate. The protein operates within cofactor biosynthesis; coenzyme A biosynthesis; CoA from (R)-pantothenate: step 4/5. In terms of biological role, reversibly transfers an adenylyl group from ATP to 4'-phosphopantetheine, yielding dephospho-CoA (dPCoA) and pyrophosphate. The chain is Phosphopantetheine adenylyltransferase from Bacillus subtilis (strain 168).